Here is a 392-residue protein sequence, read N- to C-terminus: ADP-ribosylhydrolase ARH1 (392 aa).

Mg(2+) is bound by residues Ser-79, Asp-80, and Asp-81. Lys-109 serves as a coordination point for substrate. Positions 125-127 (IQT) are substrate. Gly-159 is a substrate binding site. Substrate regions lie at residues 192-194 (HNN), 309-311 (FSG), and 315-316 (SS). Residues Asp-348, Asp-350, and Ser-351 each coordinate Mg(2+).

Belongs to the ADP-ribosylglycohydrolase family. As to quaternary structure, monomer. The cofactor is Mg(2+).

The catalysed reaction is N(omega)-(ADP-D-ribosyl)-L-arginyl-[protein] + H2O = ADP-D-ribose + L-arginyl-[protein]. Functionally, specifically acts as an arginine mono-ADP-ribosylhydrolase by mediating the removal of mono-ADP-ribose attached to arginine residues on proteins. The sequence is that of ADP-ribosylhydrolase ARH1 (adprh) from Dictyostelium discoideum (Social amoeba).